The primary structure comprises 414 residues: Tyrosine--tRNA ligase (414 aa).

Residue tyrosine 40 coordinates L-tyrosine. The short motif at 45–54 (ATAASLHVGH) is the 'HIGH' region element. Residues tyrosine 175 and glutamine 179 each contribute to the L-tyrosine site. Residues 235 to 239 (KMGKS) carry the 'KMSKS' region motif. Lysine 238 contributes to the ATP binding site. Residues 349–414 (LTVVQLLAQT…KKKHRMVQLG (66 aa)) form the S4 RNA-binding domain.

The protein belongs to the class-I aminoacyl-tRNA synthetase family. TyrS type 1 subfamily. As to quaternary structure, homodimer.

It localises to the cytoplasm. It carries out the reaction tRNA(Tyr) + L-tyrosine + ATP = L-tyrosyl-tRNA(Tyr) + AMP + diphosphate + H(+). Catalyzes the attachment of tyrosine to tRNA(Tyr) in a two-step reaction: tyrosine is first activated by ATP to form Tyr-AMP and then transferred to the acceptor end of tRNA(Tyr). In Paracoccus denitrificans (strain Pd 1222), this protein is Tyrosine--tRNA ligase.